The primary structure comprises 306 residues: tRNA dimethylallyltransferase (306 aa).

14–21 (GPTAAGKS) contributes to the ATP binding site. 16 to 21 (TAAGKS) lines the substrate pocket. Residues 39 to 42 (DSRL) are interaction with substrate tRNA.

This sequence belongs to the IPP transferase family. As to quaternary structure, monomer. The cofactor is Mg(2+).

It catalyses the reaction adenosine(37) in tRNA + dimethylallyl diphosphate = N(6)-dimethylallyladenosine(37) in tRNA + diphosphate. Its function is as follows. Catalyzes the transfer of a dimethylallyl group onto the adenine at position 37 in tRNAs that read codons beginning with uridine, leading to the formation of N6-(dimethylallyl)adenosine (i(6)A). The chain is tRNA dimethylallyltransferase from Synechococcus sp. (strain ATCC 27144 / PCC 6301 / SAUG 1402/1) (Anacystis nidulans).